The following is a 284-amino-acid chain: MELWYTEQHTEDVRFSIKVDNQLYSGQSEFQRIDVFESKEFGKFFTLDGLMMVTEKDEFIYHDMITHIPMATNPKIKNVLVIGAGDGGTVRELTRYETIENIDMVEIDKLVVDICKEYLPQTASKLEDPRVHIYYEDGLKFVRTKENEYDLIIVDSTDPFGPGEGLFTKEFYGNCFKALKEDGILVNQHESPYYASYAKSMKRAHKRIKEFFPICKVYQAHIPTYPSGHWLFGFASKKYDPIEDLNSEAWNALGLQTKYYNTDLHMGCFALPNYVKELLEKEEE.

The PABS domain occupies 2-237; it reads ELWYTEQHTE…GHWLFGFASK (236 aa). Gln-31 serves as a coordination point for S-methyl-5'-thioadenosine. Spermidine-binding residues include His-62 and Asp-86. Residues Glu-106 and 137–138 contribute to the S-methyl-5'-thioadenosine site; that span reads DG. Asp-155 functions as the Proton acceptor in the catalytic mechanism. 155–158 serves as a coordination point for spermidine; sequence DSTD. Pro-162 serves as a coordination point for S-methyl-5'-thioadenosine.

The protein belongs to the spermidine/spermine synthase family. Homodimer or homotetramer.

The protein resides in the cytoplasm. It catalyses the reaction S-adenosyl 3-(methylsulfanyl)propylamine + putrescine = S-methyl-5'-thioadenosine + spermidine + H(+). The protein operates within amine and polyamine biosynthesis; spermidine biosynthesis; spermidine from putrescine: step 1/1. Catalyzes the irreversible transfer of a propylamine group from the amino donor S-adenosylmethioninamine (decarboxy-AdoMet) to putrescine (1,4-diaminobutane) to yield spermidine. The sequence is that of Polyamine aminopropyltransferase from Alkaliphilus oremlandii (strain OhILAs) (Clostridium oremlandii (strain OhILAs)).